A 274-amino-acid polypeptide reads, in one-letter code: Penicillin-insensitive murein endopeptidase (274 aa).

Positions 1–19 (MNKTAIALLALLASSVSLA) are cleaved as a signal peptide. 3 cysteine pairs are disulfide-bonded: Cys44/Cys265, Cys187/Cys235, and Cys216/Cys223. Residues His110, His113, Asp120, Asp147, His150, and His211 each contribute to the Zn(2+) site. The interval 227–274 (PLPPPGDGCGAELQSWFEPPKPGTTKPEKKTPPPLPPSCQALLDEHVI) is disordered.

It belongs to the peptidase M74 family. In terms of assembly, dimer. It depends on Zn(2+) as a cofactor.

The protein resides in the periplasm. In terms of biological role, murein endopeptidase that cleaves the D-alanyl-meso-2,6-diamino-pimelyl amide bond that connects peptidoglycan strands. Likely plays a role in the removal of murein from the sacculus. In Escherichia coli O157:H7, this protein is Penicillin-insensitive murein endopeptidase.